Reading from the N-terminus, the 250-residue chain is MSGHSKWATIKRKKAATDQKRGNLFTKLVKEITIAAKMGGADPGGNPRLRLAIDTARSNSMPMENILRAVKKGTGELEGVTYDEITYEGYGPAGIALIIETATDNRNRTVADIRHIMSRNNGSLGESGSVSWMFHRKGSLDVSKSAVSEDMLLEILLDAGLEDLESDDAIYYTVITDLKDLETVKKALDAAAIPFENARIDMIPENYIELEAEDASKVIRIIDALENNDDVQAVYSNMEISEKAMNSLNE.

Belongs to the TACO1 family.

Its subcellular location is the cytoplasm. The polypeptide is Probable transcriptional regulatory protein Cpha266_0538 (Chlorobium phaeobacteroides (strain DSM 266 / SMG 266 / 2430)).